The primary structure comprises 185 residues: Elongation factor P (185 aa).

The protein belongs to the elongation factor P family.

Its subcellular location is the cytoplasm. It participates in protein biosynthesis; polypeptide chain elongation. In terms of biological role, involved in peptide bond synthesis. Stimulates efficient translation and peptide-bond synthesis on native or reconstituted 70S ribosomes in vitro. Probably functions indirectly by altering the affinity of the ribosome for aminoacyl-tRNA, thus increasing their reactivity as acceptors for peptidyl transferase. The chain is Elongation factor P from Geobacillus kaustophilus (strain HTA426).